A 117-amino-acid polypeptide reads, in one-letter code: Large ribosomal subunit protein bL20 (117 aa).

This sequence belongs to the bacterial ribosomal protein bL20 family.

Binds directly to 23S ribosomal RNA and is necessary for the in vitro assembly process of the 50S ribosomal subunit. It is not involved in the protein synthesizing functions of that subunit. The sequence is that of Large ribosomal subunit protein bL20 from Helicobacter hepaticus (strain ATCC 51449 / 3B1).